The chain runs to 178 residues: uncharacterized protein (178 aa).

The protein belongs to the tail fiber family.

This is an uncharacterized protein from Escherichia coli (strain K12).